Reading from the N-terminus, the 467-residue chain is MELYAAGRYDSEPFKMNEHDIIQLYGEDVQYVKNAFLSSDSTCNNNVYSLEEHELDDDKKNLSGVLVEYKIKISLLQSSDGVKHLFFCTNPKSVDIARMLEIPEGKDKTRVYFMMPLLVLCLGLSATFSGLNLAIMSFSINDLKLIQESDSDKLMKQRAMDVMRLRRNSNFVLVTIIFGNCFCNISITLLMNYFAEFYGFGGFIFVELISTALLLIFTEILPSLIFTKNALAIASRLQYFVIFTMCITSPISYPLAMLLNIILGKENADDSAPLDLDALQIDELEDEEAADGNNFHEMMSVVKKTIKLREKLASDVMTEIDKVGMYSEHQQVTHSFLLDAYEQGHSRLPVYEGETRNKIRGVLNITDMMLLMDDEGRGSDTDLTLGTMLSVLEKRRKHCFVLDTMPVEHFMSELQQGCPMAIVVRYKEVDSEEDGTEIYEVCGIVTLEDCIEEILGEIFDEKDARQE.

The Extracellular segment spans residues 1–110 (MELYAAGRYD…EIPEGKDKTR (110 aa)). N-linked (GlcNAc...) asparagine glycosylation is present at N61. One can recognise a CNNM transmembrane domain in the interval 107–293 (DKTRVYFMMP…LEDEEAADGN (187 aa)). Residues 111–131 (VYFMMPLLVLCLGLSATFSGL) traverse the membrane as a helical segment. Over 132 to 170 (NLAIMSFSINDLKLIQESDSDKLMKQRAMDVMRLRRNSN) the chain is Cytoplasmic. The chain crosses the membrane as a helical span at residues 171-191 (FVLVTIIFGNCFCNISITLLM). Residues 192–196 (NYFAE) lie on the Extracellular side of the membrane. The helical transmembrane segment at 197-217 (FYGFGGFIFVELISTALLLIF) threads the bilayer. At 218 to 238 (TEILPSLIFTKNALAIASRLQ) the chain is on the cytoplasmic side. A helical membrane pass occupies residues 239–259 (YFVIFTMCITSPISYPLAMLL). Over 260 to 467 (NIILGKENAD…IFDEKDARQE (208 aa)) the chain is Extracellular. 2 CBS domains span residues 317-381 (MTEI…GSDT) and 394-461 (KRRK…IFDE). N364 carries an N-linked (GlcNAc...) asparagine glycan.

Belongs to the ACDP family.

The protein localises to the cell membrane. Probable metal transporter. Probably acts redundantly with the other metal transport proteins cnnm-1, cnnm-2, cnnm-3 and cnnm-5 to regulate Mg(2+) homeostasis. The chain is Metal transporter cnnm-4 from Caenorhabditis elegans.